A 241-amino-acid polypeptide reads, in one-letter code: Alkylated DNA repair protein ALKBH6 homolog (241 aa).

Positions alanine 87–proline 232 constitute a Fe2OG dioxygenase domain. Histidine 105, aspartate 107, and histidine 181 together coordinate Fe cation. 2-oxoglutarate-binding residues include arginine 223 and arginine 229.

The protein belongs to the alkB family. The cofactor is Fe(2+).

The protein resides in the nucleus. Probable RNA demethylase that binds to both N6-methyladenosine-containing- (m(6)A) and C5-methylcytidine-containing- (m(5)C) RNAs, thus being a probable m(6)A and m(5)C eraser. Involved in responses to abscisic acid (ABA) via the modulation of the expression of ABA signaling-related genes (e.g. ABI3 and ABI4). Acts as a negative regulator during seed germination under abiotic stresses (e.g. salt, cold and ABA). Positive modulator of seedling growth and survival in response to drought and heat, but counteracts tolerance to salt. The protein is Alkylated DNA repair protein ALKBH6 homolog of Arabidopsis thaliana (Mouse-ear cress).